The sequence spans 153 residues: Myosin regulatory light chain LC-2, mantle muscle (153 aa).

Ala-1 bears the Blocked amino end (Ala) mark. EF-hand domains lie at 13-48 (RQMQELKEAFTMIDQDRDGFIGMEDLKDMFSSLGRV) and 82-117 (DPEDALRNAFSMFDEDGQGFIPEDYLKDLLENMGDN). Asp-26, Asp-28, Asp-30, and Asp-37 together coordinate Ca(2+).

Functionally, in molluscan muscle, calcium regulation is associated with myosin rather than with actin. Muscle myosin contains two types of light chains: the catalytic light chain, essential for ATPase activity, and the regulatory light chain, a calcium-binding protein responsible for Ca(2+) dependent binding and Ca(2+) dependent Mg-ATPase activity. The chain is Myosin regulatory light chain LC-2, mantle muscle from Todarodes pacificus (Japanese flying squid).